The primary structure comprises 209 residues: MGQVFLLMPVLLVAGYLSLGAAMENQRLFNIAVNRVQHLHLLAQKMFNDFEGTLLPDERRQLNKIFLLDFCNSDSIVSPIDKHETQKSSVLKLLHISFRLIESWEYPSQTLTHTMSNNLNQNQMSEKLSNLKVGINLLIKGNQEDVPSLDDNDSQQLLPYGNYYQNLGDNDNVRRNYELLACFKKDMHKVETYLTVAKCRKSLEANCTL.

A signal peptide spans 1 to 22 (MGQVFLLMPVLLVAGYLSLGAA). A Zn(2+)-binding site is contributed by H38. C71 and C182 are joined by a disulfide. E191 is a binding site for Zn(2+). C199 and C207 form a disulfide bridge.

The protein belongs to the somatotropin/prolactin family.

The protein localises to the secreted. Functionally, growth hormone plays an important role in growth control and is involved in the regulation of several anabolic processes. Implicated as an osmoregulatory substance important for seawater adaptation. This chain is Somatotropin (gh), found in Esox lucius (Northern pike).